The sequence spans 392 residues: Serpin B11 (392 aa).

The segment at 341–365 (EEGTEAAAATGDSIAVKSLPMRAQF) is RCL.

It belongs to the serpin family. Ov-serpin subfamily. Detected in a restricted number of tissues, including lung, placenta, prostate, and tonsil.

Its subcellular location is the cytoplasm. Its function is as follows. Has no serine protease inhibitory activity, probably due to variants in the scaffold impairing conformational change. The chain is Serpin B11 (SERPINB11) from Homo sapiens (Human).